Reading from the N-terminus, the 59-residue chain is Chromatin protein Cren7 (59 aa).

The protein belongs to the Cren7 family. In terms of assembly, monomer. Methylated at multiple sites, to varying extents.

Its subcellular location is the chromosome. It is found in the cytoplasm. Functionally, a chromatin protein, binds double-stranded DNA without sequence specificity. Constrains negative DNA supercoils. The protein is Chromatin protein Cren7 of Pyrobaculum neutrophilum (strain DSM 2338 / JCM 9278 / NBRC 100436 / V24Sta) (Thermoproteus neutrophilus).